A 219-amino-acid chain; its full sequence is Multiple organellar RNA editing factor 2, chloroplastic (219 aa).

A chloroplast-targeting transit peptide spans 1 to 48 (MALPLSGTRHLTRALLSNVTLMAPPRIPSSVHYGGSRLGCSTRFFSIR). Positions 182 to 219 (VQRSPERQRRVEPQPQRAQDRPRYNDRTRYSRRRENTR) are disordered. Over residues 185 to 219 (SPERQRRVEPQPQRAQDRPRYNDRTRYSRRRENTR) the composition is skewed to basic and acidic residues.

Belongs to the MORF family. Homodimer and heterodimer with MORF9. Interacts with protoporphyrinogen oxidase 1 PPOX1. Heterodimers with MORF8/RIP1 and MORF9/RIP9. Interacts with PCMP-A2/PMD1. Interacts with ORRM1. Interacts with ORRM6.

It localises to the plastid. The protein localises to the chloroplast. In terms of biological role, involved in plastid rRNA processing and consequently in translation and early chloroplast differentiation. Involved in organellar RNA editing. Required for the processing of multiple editing sites in plastids. This chain is Multiple organellar RNA editing factor 2, chloroplastic, found in Arabidopsis thaliana (Mouse-ear cress).